We begin with the raw amino-acid sequence, 148 residues long: MGGGERYNIPDRPAPKKSQPVSRGKQRSRDQNGVMHSAASGALGVPHHLRRGEKGTSYSWSPEARQAVSVDKKNGSVRFATPYDQNWESHLNKLLSAQCGQNYAGAKFSEPPSPSVLPKPPSHWVSLPMGDHRELMTFQLKSLLKVQA.

Residues methionine 1–serine 69 form a disordered region. The short motif at serine 109 to serine 115 is the SH3-binding element.

This sequence belongs to the PNRC family. PNRC2 subfamily.

It is found in the nucleus. The protein resides in the cytoplasm. Its subcellular location is the P-body. Functionally, involved in nonsense-mediated mRNA decay (NMD) by acting as a bridge between the mRNA decapping complex and the NMD machinery. May act by targeting the NMD machinery to the P-body and recruiting the decapping machinery to aberrant mRNAs. Required for upf1/rent1 localization to the P-body. Also acts as a nuclear receptor coactivator. This is Proline-rich nuclear receptor coactivator 2 (pnrc2) from Danio rerio (Zebrafish).